We begin with the raw amino-acid sequence, 163 residues long: Glutathione peroxidase 1 (163 aa).

Residue C36 is part of the active site.

It belongs to the glutathione peroxidase family.

It is found in the cytoplasm. It catalyses the reaction 2 glutathione + H2O2 = glutathione disulfide + 2 H2O. Its function is as follows. May constitute a glutathione peroxidase-like protective system against oxidative stresses. The polypeptide is Glutathione peroxidase 1 (gpx-1) (Caenorhabditis elegans).